Consider the following 62-residue polypeptide: U-stichotoxin-Hau1a (62 aa).

The first 21 residues, 1–21 (MKPAIFLMLFVAMFLISEGEG), serve as a signal peptide directing secretion. Positions 22–31 (FKPKDAPQER) are excised as a propeptide. A Hydroxyproline modification is found at Pro-36. Cystine bridges form between Cys-41–Cys-53 and Cys-44–Cys-59.

Belongs to the Hau1a/HC18/HC19 family.

It is found in the secreted. Its subcellular location is the nematocyst. Toxin that is lethal to crab. Does not produce the typical symptoms associated with sodium channel toxins in crabs, suggesting that it likely does not act on sodium channels. In Heteractis aurora (Banded sea anemone), this protein is U-stichotoxin-Hau1a.